Here is a 60-residue protein sequence, read N- to C-terminus: Large ribosomal subunit protein uL30 (60 aa).

The protein belongs to the universal ribosomal protein uL30 family. As to quaternary structure, part of the 50S ribosomal subunit.

This chain is Large ribosomal subunit protein uL30, found in Shewanella sp. (strain ANA-3).